A 188-amino-acid chain; its full sequence is dCTP deaminase (188 aa).

DCTP contacts are provided by residues 111–116 (KSTYAR), 135–137 (TLE), Gln-156, Tyr-170, Lys-179, and Gln-180. The Proton donor/acceptor role is filled by Glu-137.

It belongs to the dCTP deaminase family. In terms of assembly, homotrimer.

The catalysed reaction is dCTP + H2O + H(+) = dUTP + NH4(+). It functions in the pathway pyrimidine metabolism; dUMP biosynthesis; dUMP from dCTP (dUTP route): step 1/2. Its function is as follows. Catalyzes the deamination of dCTP to dUTP. The protein is dCTP deaminase of Orientia tsutsugamushi (strain Boryong) (Rickettsia tsutsugamushi).